Reading from the N-terminus, the 540-residue chain is MNGRSYEVRTFGCQMNVHDSERLCGLLESAGYSPVDPGGEADVVVFNTCAVRENADNRLYGNLGQLVPVKKGHPGMQIAVGGCLAQKDRAAILDRAPWVDVVFGTHNLHRLPVLLERARHNAAAQVEIAEALEVFPSSLPTRRASHHSAWVSISVGCDNTCTFCIVPSLRGRERDRRPGDVLAEVEALVAEGALEITLLGQNVNSYGRSLGDPGAFAKLLAACGRVDGLERVRFTSPHPRDFTDDVIEAMATTSNVCHQLHMPLQSGSDTVLRRMRRSYRRDRFLGIVERVRAAMPDAAITTDIIVGFPGETEADFADTLDVVRAARFSGAFTFQYSPRPGTPAATMDAQVDRATVADRYTRLVALQDEISWAENRALVGRRVEVLVSEGEGRKDGATGRMSGRARDGRLVHFRADEAASSSTGSGPRAGGAAPAVAVAVAPTVRPGDVVETVVTRAAPHHLTADGPLRSHRATRAGDAWALGRDGDGGGAAAAQQPADGRPIVTLGIPSLRPSSPDPVGPASADAASAGADACCTPVRR.

An MTTase N-terminal domain is found at 4 to 120 (RSYEVRTFGC…LPVLLERARH (117 aa)). The [4Fe-4S] cluster site is built by Cys13, Cys49, Cys83, Cys157, Cys161, and Cys164. The 232-residue stretch at 143–374 (RASHHSAWVS…ALQDEISWAE (232 aa)) folds into the Radical SAM core domain. One can recognise a TRAM domain in the interval 376 to 468 (RALVGRRVEV…PHHLTADGPL (93 aa)). The tract at residues 480-540 (WALGRDGDGG…ADACCTPVRR (61 aa)) is disordered. Low complexity-rich tracts occupy residues 492-502 (AAAQQPADGRP) and 520-533 (GPAS…GADA).

The protein belongs to the methylthiotransferase family. MiaB subfamily. In terms of assembly, monomer. It depends on [4Fe-4S] cluster as a cofactor.

It localises to the cytoplasm. It carries out the reaction N(6)-dimethylallyladenosine(37) in tRNA + (sulfur carrier)-SH + AH2 + 2 S-adenosyl-L-methionine = 2-methylsulfanyl-N(6)-dimethylallyladenosine(37) in tRNA + (sulfur carrier)-H + 5'-deoxyadenosine + L-methionine + A + S-adenosyl-L-homocysteine + 2 H(+). Its function is as follows. Catalyzes the methylthiolation of N6-(dimethylallyl)adenosine (i(6)A), leading to the formation of 2-methylthio-N6-(dimethylallyl)adenosine (ms(2)i(6)A) at position 37 in tRNAs that read codons beginning with uridine. This is tRNA-2-methylthio-N(6)-dimethylallyladenosine synthase from Frankia casuarinae (strain DSM 45818 / CECT 9043 / HFP020203 / CcI3).